The chain runs to 481 residues: Glutamate-1-semialdehyde 2,1-aminomutase, chloroplastic (481 aa).

A disordered region spans residues 18–40; that stretch reads NQTPKWGFSPSHRRCNPSSSSSA. The residue at position 321 (K321) is an N6-(pyridoxal phosphate)lysine.

This sequence belongs to the class-III pyridoxal-phosphate-dependent aminotransferase family. HemL subfamily. As to quaternary structure, homodimer. Pyridoxal 5'-phosphate serves as cofactor.

The protein resides in the plastid. Its subcellular location is the chloroplast. The enzyme catalyses (S)-4-amino-5-oxopentanoate = 5-aminolevulinate. It participates in porphyrin-containing compound metabolism; protoporphyrin-IX biosynthesis; 5-aminolevulinate from L-glutamyl-tRNA(Glu): step 2/2. Its pathway is porphyrin-containing compound metabolism; chlorophyll biosynthesis. The chain is Glutamate-1-semialdehyde 2,1-aminomutase, chloroplastic from Solanum lycopersicum (Tomato).